The following is a 1207-amino-acid chain: DNA-directed RNA polymerase subunit beta' (1207 aa).

Positions 60, 62, 75, and 78 each coordinate Zn(2+). Residues D449, D451, and D453 each contribute to the Mg(2+) site. Zn(2+) is bound by residues C822, C896, C903, and C906.

The protein belongs to the RNA polymerase beta' chain family. The RNAP catalytic core consists of 2 alpha, 1 beta, 1 beta' and 1 omega subunit. When a sigma factor is associated with the core the holoenzyme is formed, which can initiate transcription. The cofactor is Mg(2+). It depends on Zn(2+) as a cofactor.

It carries out the reaction RNA(n) + a ribonucleoside 5'-triphosphate = RNA(n+1) + diphosphate. In terms of biological role, DNA-dependent RNA polymerase catalyzes the transcription of DNA into RNA using the four ribonucleoside triphosphates as substrates. This is DNA-directed RNA polymerase subunit beta' from Staphylococcus aureus (strain MRSA252).